A 596-amino-acid polypeptide reads, in one-letter code: Adenine deaminase (596 aa).

Belongs to the metallo-dependent hydrolases superfamily. Adenine deaminase family. The cofactor is Mn(2+).

It catalyses the reaction adenine + H2O + H(+) = hypoxanthine + NH4(+). This Moorella thermoacetica (strain ATCC 39073 / JCM 9320) protein is Adenine deaminase.